The chain runs to 1082 residues: Integrator complex subunit 3 homolog (1082 aa).

Disordered stretches follow at residues 483 to 563, 923 to 945, and 1005 to 1082; these read PGPP…VSDD, YPSN…TAPT, and DETS…SDSD. 2 stretches are compositionally biased toward low complexity: residues 517–528 and 542–555; these read PAAKAASTAASA and TKPA…TTTT. The segment covering 936–945 has biased composition (polar residues); that stretch reads KSAQQNTAPT. Low complexity-rich tracts occupy residues 1008–1018 and 1033–1056; these read STTVGRRGTSS and EKAA…ASAK.

Belongs to the Integrator subunit 3 family. In terms of assembly, belongs to the multiprotein complex Integrator. The core complex associates with protein phosphatase 2A subunits, to form the Integrator-PP2A (INTAC) complex.

Its subcellular location is the nucleus. The protein localises to the cytoplasm. Functionally, component of the integrator complex, a multiprotein complex that terminates RNA polymerase II (Pol II) transcription in the promoter-proximal region of genes. The integrator complex provides a quality checkpoint during transcription elongation by driving premature transcription termination of transcripts that are unfavorably configured for transcriptional elongation: the complex terminates transcription by (1) catalyzing dephosphorylation of the C-terminal domain (CTD) of Pol II subunit Polr2A/Rbp1 and Spt5, and (2) degrading the exiting nascent RNA transcript via endonuclease activity. The integrator complex is also involved in the 3'-end processing of the U7 snRNA, and also the spliceosomal snRNAs U1, U2, U4 and U5. In Anopheles gambiae (African malaria mosquito), this protein is Integrator complex subunit 3 homolog.